The sequence spans 170 residues: ATP synthase subunit b (170 aa).

Residues 11-31 (AFTFGDAFFTLFAFAILLVLI) form a helical membrane-spanning segment.

This sequence belongs to the ATPase B chain family. F-type ATPases have 2 components, F(1) - the catalytic core - and F(0) - the membrane proton channel. F(1) has five subunits: alpha(3), beta(3), gamma(1), delta(1), epsilon(1). F(0) has three main subunits: a(1), b(2) and c(10-14). The alpha and beta chains form an alternating ring which encloses part of the gamma chain. F(1) is attached to F(0) by a central stalk formed by the gamma and epsilon chains, while a peripheral stalk is formed by the delta and b chains.

It localises to the cell membrane. Its function is as follows. F(1)F(0) ATP synthase produces ATP from ADP in the presence of a proton or sodium gradient. F-type ATPases consist of two structural domains, F(1) containing the extramembraneous catalytic core and F(0) containing the membrane proton channel, linked together by a central stalk and a peripheral stalk. During catalysis, ATP synthesis in the catalytic domain of F(1) is coupled via a rotary mechanism of the central stalk subunits to proton translocation. In terms of biological role, component of the F(0) channel, it forms part of the peripheral stalk, linking F(1) to F(0). The protein is ATP synthase subunit b of Listeria monocytogenes serotype 4b (strain F2365).